The following is an 89-amino-acid chain: UPF0237 protein CA_C0478 (89 aa).

One can recognise an ACT domain in the interval 4–78 (IITVIGKDKV…KKLGVSIKIQ (75 aa)).

This sequence belongs to the UPF0237 family.

The sequence is that of UPF0237 protein CA_C0478 from Clostridium acetobutylicum (strain ATCC 824 / DSM 792 / JCM 1419 / IAM 19013 / LMG 5710 / NBRC 13948 / NRRL B-527 / VKM B-1787 / 2291 / W).